The primary structure comprises 286 residues: Release factor glutamine methyltransferase (286 aa).

S-adenosyl-L-methionine-binding residues include aspartate 148 and asparagine 194. 194 to 197 (NPPY) lines the substrate pocket.

This sequence belongs to the protein N5-glutamine methyltransferase family. PrmC subfamily.

It catalyses the reaction L-glutaminyl-[peptide chain release factor] + S-adenosyl-L-methionine = N(5)-methyl-L-glutaminyl-[peptide chain release factor] + S-adenosyl-L-homocysteine + H(+). Methylates the class 1 translation termination release factors RF1/PrfA and RF2/PrfB on the glutamine residue of the universally conserved GGQ motif. This Leptospira interrogans serogroup Icterohaemorrhagiae serovar Lai (strain 56601) protein is Release factor glutamine methyltransferase.